We begin with the raw amino-acid sequence, 292 residues long: Phosphatidylserine decarboxylase proenzyme (292 aa).

Active-site charge relay system; for autoendoproteolytic cleavage activity residues include aspartate 89, histidine 146, and serine 252. The active-site Schiff-base intermediate with substrate; via pyruvic acid; for decarboxylase activity is serine 252. Serine 252 is subject to Pyruvic acid (Ser); by autocatalysis.

This sequence belongs to the phosphatidylserine decarboxylase family. PSD-B subfamily. Prokaryotic type I sub-subfamily. In terms of assembly, heterodimer of a large membrane-associated beta subunit and a small pyruvoyl-containing alpha subunit. Pyruvate serves as cofactor. In terms of processing, is synthesized initially as an inactive proenzyme. Formation of the active enzyme involves a self-maturation process in which the active site pyruvoyl group is generated from an internal serine residue via an autocatalytic post-translational modification. Two non-identical subunits are generated from the proenzyme in this reaction, and the pyruvate is formed at the N-terminus of the alpha chain, which is derived from the carboxyl end of the proenzyme. The autoendoproteolytic cleavage occurs by a canonical serine protease mechanism, in which the side chain hydroxyl group of the serine supplies its oxygen atom to form the C-terminus of the beta chain, while the remainder of the serine residue undergoes an oxidative deamination to produce ammonia and the pyruvoyl prosthetic group on the alpha chain. During this reaction, the Ser that is part of the protease active site of the proenzyme becomes the pyruvoyl prosthetic group, which constitutes an essential element of the active site of the mature decarboxylase.

Its subcellular location is the cell membrane. It carries out the reaction a 1,2-diacyl-sn-glycero-3-phospho-L-serine + H(+) = a 1,2-diacyl-sn-glycero-3-phosphoethanolamine + CO2. The protein operates within phospholipid metabolism; phosphatidylethanolamine biosynthesis; phosphatidylethanolamine from CDP-diacylglycerol: step 2/2. Its function is as follows. Catalyzes the formation of phosphatidylethanolamine (PtdEtn) from phosphatidylserine (PtdSer). The polypeptide is Phosphatidylserine decarboxylase proenzyme (Shewanella sp. (strain MR-4)).